The primary structure comprises 504 residues: Anaerobic nitric oxide reductase transcription regulator NorR (504 aa).

Asp-57 carries the post-translational modification 4-aspartylphosphate. One can recognise a Sigma-54 factor interaction domain in the interval 187 to 416 (MIGLSPGMTQ…LEHAIHRAVV (230 aa)). ATP is bound by residues 215-222 (GETGTGKE) and 278-287 (ADNGTLFLDE). A DNA-binding region (H-T-H motif) is located at residues 479–498 (WAACARMLETDVANLHRLAK).

It participates in nitrogen metabolism; nitric oxide reduction. In terms of biological role, required for the expression of anaerobic nitric oxide (NO) reductase, acts as a transcriptional activator for at least the norVW operon. Activation also requires sigma-54. The polypeptide is Anaerobic nitric oxide reductase transcription regulator NorR (Escherichia coli O81 (strain ED1a)).